Here is a 275-residue protein sequence, read N- to C-terminus: Mitochondrial outer membrane protein porin (275 aa).

Position 1 is a blocked amino end (Met) (Met1).

This sequence belongs to the eukaryotic mitochondrial porin family. Highly divergent.

The protein resides in the mitochondrion outer membrane. In terms of biological role, forms a channel of about 1,7 nM through the cell membrane that allows diffusion of small hydrophilic molecules. The channel adopts an open conformation at low or zero membrane potential and a closed conformation at potentials above 20 mv. The open state has a weak anion selectivity whereas the closed state is cation-selective. This Dictyostelium discoideum (Social amoeba) protein is Mitochondrial outer membrane protein porin (porA).